Reading from the N-terminus, the 429-residue chain is Glutamate-1-semialdehyde 2,1-aminomutase 2 (429 aa).

At Lys-268 the chain carries N6-(pyridoxal phosphate)lysine.

This sequence belongs to the class-III pyridoxal-phosphate-dependent aminotransferase family. HemL subfamily. Homodimer. It depends on pyridoxal 5'-phosphate as a cofactor.

The protein localises to the cytoplasm. The catalysed reaction is (S)-4-amino-5-oxopentanoate = 5-aminolevulinate. The protein operates within porphyrin-containing compound metabolism; protoporphyrin-IX biosynthesis; 5-aminolevulinate from L-glutamyl-tRNA(Glu): step 2/2. The sequence is that of Glutamate-1-semialdehyde 2,1-aminomutase 2 from Halalkalibacterium halodurans (strain ATCC BAA-125 / DSM 18197 / FERM 7344 / JCM 9153 / C-125) (Bacillus halodurans).